The following is a 182-amino-acid chain: ATP-dependent protease subunit HslV (182 aa).

The active site involves T10. Na(+) is bound by residues A166, C169, and S172.

This sequence belongs to the peptidase T1B family. HslV subfamily. As to quaternary structure, a double ring-shaped homohexamer of HslV is capped on each side by a ring-shaped HslU homohexamer. The assembly of the HslU/HslV complex is dependent on binding of ATP.

It localises to the cytoplasm. The enzyme catalyses ATP-dependent cleavage of peptide bonds with broad specificity.. Allosterically activated by HslU binding. Functionally, protease subunit of a proteasome-like degradation complex believed to be a general protein degrading machinery. The sequence is that of ATP-dependent protease subunit HslV from Rickettsia africae (strain ESF-5).